The following is a 61-amino-acid chain: Large ribosomal subunit protein uL30 (61 aa).

It belongs to the universal ribosomal protein uL30 family. In terms of assembly, part of the 50S ribosomal subunit.

The protein is Large ribosomal subunit protein uL30 of Corynebacterium jeikeium (strain K411).